We begin with the raw amino-acid sequence, 723 residues long: Phenylalanine ammonia-lyase (723 aa).

Tyr77 (proton donor/acceptor) is an active-site residue. Positions 182-184 (ASG) form a cross-link, 5-imidazolinone (Ala-Gly). The residue at position 183 (Ser183) is a 2,3-didehydroalanine (Ser). Residues Asn241, Gln336, Arg342, Asn372, Lys443, Glu471, and Asn474 each coordinate (E)-cinnamate.

It belongs to the PAL/histidase family. Post-translationally, contains an active site 4-methylidene-imidazol-5-one (MIO), which is formed autocatalytically by cyclization and dehydration of residues Ala-Ser-Gly.

Its subcellular location is the cytoplasm. The catalysed reaction is L-phenylalanine = (E)-cinnamate + NH4(+). The protein operates within secondary metabolite biosynthesis. Its pathway is phenylpropanoid metabolism; trans-cinnamate biosynthesis; trans-cinnamate from L-phenylalanine: step 1/1. Phenylalanine ammonia-lyase; part of the gene cluster that mediates the biosynthesis of squalestatin S1 (SQS1, also known as zaragozic acid A), a heavily oxidized fungal polyketide that offers potent cholesterol lowering activity by targeting squalene synthase (SS). SQS1 is composed of a 2,8-dioxobicyclic[3.2.1]octane-3,4,5-tricarboxyclic acid core that is connected to two lipophilic polyketide arms. These initial steps feature the priming of an unusual benzoic acid starter unit onto the highly reducing polyketide synthase clz14, followed by oxaloacetate extension and product release to generate a tricarboxylic acid containing product. The phenylalanine ammonia lyase (PAL) clz10 and the acyl-CoA ligase clz12 are involved in transforming phenylalanine into benzoyl-CoA. The citrate synthase-like protein clz17 is involved in connecting the C-alpha-carbons of the hexaketide chain and oxaloacetate to afford the tricarboxylic acid unit. The potential hydrolytic enzymes, clz11 and clz13, are in close proximity to pks2 and may participate in product release. On the other side, the tetraketide arm is synthesized by a the squalestatin tetraketide synthase clz2 and enzymatically esterified to the core in the last biosynthetic step, by the acetyltransferase clz6. The biosynthesis of the tetraketide must involve 3 rounds of chain extension. After the first and second rounds methyl-transfer occurs, and in all rounds of extension the ketoreductase and dehydratase are active. The enoyl reductase and C-MeT of clz2 are not active in the final round of extension. The acetyltransferase clz6 appears to have a broad substrate selectivity for its acyl CoA substrate, allowing the in vitro synthesis of novel squalestatins. The biosynthesis of SQS1 requires several oxidative steps likely performed by oxidoreductases clz3, clz15 and clz16. Finally, in support of the identification of the cluster as being responsible for SQS1 production, the cluster contains a gene encoding a putative squalene synthase (SS) clz20, suggesting a likely mechanism for self-resistance. The sequence is that of Phenylalanine ammonia-lyase from Cochliobolus lunatus (Filamentous fungus).